The chain runs to 141 residues: Nucleoside diphosphate kinase (141 aa).

Residues Lys11, Phe59, Arg87, Thr93, Arg104, and Asn114 each contribute to the ATP site. The active-site Pros-phosphohistidine intermediate is His117.

It belongs to the NDK family. In terms of assembly, homotetramer. The cofactor is Mg(2+).

The protein resides in the cytoplasm. The enzyme catalyses a 2'-deoxyribonucleoside 5'-diphosphate + ATP = a 2'-deoxyribonucleoside 5'-triphosphate + ADP. It carries out the reaction a ribonucleoside 5'-diphosphate + ATP = a ribonucleoside 5'-triphosphate + ADP. Functionally, major role in the synthesis of nucleoside triphosphates other than ATP. The ATP gamma phosphate is transferred to the NDP beta phosphate via a ping-pong mechanism, using a phosphorylated active-site intermediate. This Cupriavidus necator (strain ATCC 17699 / DSM 428 / KCTC 22496 / NCIMB 10442 / H16 / Stanier 337) (Ralstonia eutropha) protein is Nucleoside diphosphate kinase.